The following is a 556-amino-acid chain: Protein F37C4.5 (556 aa).

Residue alanine 2 is modified to N-acetylalanine.

This chain is Protein F37C4.5, found in Caenorhabditis elegans.